We begin with the raw amino-acid sequence, 226 residues long: Ribonuclease 3 (226 aa).

An RNase III domain is found at 7-129; sequence LPRLCRTLGY…IIGAIYLDSD (123 aa). E42 provides a ligand contact to Mg(2+). D46 is a catalytic residue. Positions 115 and 118 each coordinate Mg(2+). Residue E118 is part of the active site. Residues 156-226 form the DRBM domain; it reads DAKTLLQEYL…AAQVLELLKK (71 aa).

This sequence belongs to the ribonuclease III family. In terms of assembly, homodimer. Requires Mg(2+) as cofactor.

The protein resides in the cytoplasm. It carries out the reaction Endonucleolytic cleavage to 5'-phosphomonoester.. Functionally, digests double-stranded RNA. Involved in the processing of primary rRNA transcript to yield the immediate precursors to the large and small rRNAs (23S and 16S). Processes some mRNAs, and tRNAs when they are encoded in the rRNA operon. Processes pre-crRNA and tracrRNA of type II CRISPR loci if present in the organism. The chain is Ribonuclease 3 from Shewanella sp. (strain ANA-3).